The sequence spans 366 residues: Glutamate 5-kinase (366 aa).

Lys-17 serves as a coordination point for ATP. Substrate is bound by residues Ser-57, Asp-144, and Asn-156. ATP-binding positions include 176-177 (SD) and 216-222 (TGGMASK). The PUA domain occupies 278 to 352 (RGALVLDDGA…GRSTTELPDT (75 aa)).

This sequence belongs to the glutamate 5-kinase family.

The protein resides in the cytoplasm. The enzyme catalyses L-glutamate + ATP = L-glutamyl 5-phosphate + ADP. Its pathway is amino-acid biosynthesis; L-proline biosynthesis; L-glutamate 5-semialdehyde from L-glutamate: step 1/2. In terms of biological role, catalyzes the transfer of a phosphate group to glutamate to form L-glutamate 5-phosphate. The sequence is that of Glutamate 5-kinase from Nocardia farcinica (strain IFM 10152).